Here is a 255-residue protein sequence, read N- to C-terminus: 4-hydroxy-tetrahydrodipicolinate reductase (255 aa).

NAD(+) contacts are provided by residues 9 to 14, Asp35, 89 to 91, and 115 to 118; these read GFKGKM, GTT, and APNF. His145 functions as the Proton donor/acceptor in the catalytic mechanism. Residue His146 participates in (S)-2,3,4,5-tetrahydrodipicolinate binding. The active-site Proton donor is the Lys149. 155–156 contacts (S)-2,3,4,5-tetrahydrodipicolinate; it reads GT.

This sequence belongs to the DapB family.

Its subcellular location is the cytoplasm. It carries out the reaction (S)-2,3,4,5-tetrahydrodipicolinate + NAD(+) + H2O = (2S,4S)-4-hydroxy-2,3,4,5-tetrahydrodipicolinate + NADH + H(+). The enzyme catalyses (S)-2,3,4,5-tetrahydrodipicolinate + NADP(+) + H2O = (2S,4S)-4-hydroxy-2,3,4,5-tetrahydrodipicolinate + NADPH + H(+). It participates in amino-acid biosynthesis; L-lysine biosynthesis via DAP pathway; (S)-tetrahydrodipicolinate from L-aspartate: step 4/4. Its function is as follows. Catalyzes the conversion of 4-hydroxy-tetrahydrodipicolinate (HTPA) to tetrahydrodipicolinate. The polypeptide is 4-hydroxy-tetrahydrodipicolinate reductase (Streptococcus pneumoniae (strain P1031)).